We begin with the raw amino-acid sequence, 97 residues long: uncharacterized protein (97 aa).

May have a regulatory function. This is an uncharacterized protein from Synechocystis sp. (strain ATCC 27184 / PCC 6803 / Kazusa).